We begin with the raw amino-acid sequence, 241 residues long: Acetoacetyl-CoA reductase (241 aa).

Residues 12 to 14 and 82 to 86 contribute to the NADP(+) site; these read RGI and NAGIT. Substrate contacts are provided by residues Asp-88 and 141–144; that span reads QMGQ. The Proton acceptor role is filled by Tyr-147. NADP(+) is bound at residue 177–180; sequence PGYI. 178 to 179 provides a ligand contact to substrate; sequence GY.

The protein belongs to the short-chain dehydrogenases/reductases (SDR) family.

It is found in the cytoplasm. The enzyme catalyses a (3R)-3-hydroxyacyl-CoA + NADP(+) = a 3-oxoacyl-CoA + NADPH + H(+). Its pathway is biopolymer metabolism; poly-(R)-3-hydroxybutanoate biosynthesis. This chain is Acetoacetyl-CoA reductase, found in Shinella zoogloeoides (Crabtreella saccharophila).